A 267-amino-acid chain; its full sequence is Interleukin-2 receptor subunit alpha (267 aa).

The N-terminal stretch at 1–21 is a signal peptide; it reads MEPHLLMLGFLSFTIVPGCWA. The Sushi 1 domain maps to 22–79; the sequence is ELCLYDPPEVPNATFKALSYKNGTILNCECKRGFRRLNELVYMACLGNSWSNNCQCTS. At 22 to 235 the chain is on the extracellular side; the sequence is ELCLYDPPEV…ETFVFTKEYQ (214 aa). Cystine bridges form between C24–C66, C49–C75, and C51–C77. N-linked (GlcNAc...) asparagine glycosylation is found at N33 and N43. Residues 82 to 93 are compositionally biased toward polar residues; the sequence is HDNSREQVTPQP. The disordered stretch occupies residues 82–108; it reads HDNSREQVTPQPEGQKEQQTTDTQKST. The segment covering 98 to 108 has biased composition (low complexity); it reads EQQTTDTQKST. In terms of domain architecture, Sushi 2 spans 118-181; sequence GHCREPPPWR…WTHPQLTCVD (64 aa). Disulfide bonds link C120–C163 and C147–C179. The interval 191-215 is disordered; sequence SEESQGSRNSFPESEASCPTPNTDF. The segment covering 192-215 has biased composition (polar residues); that stretch reads EESQGSRNSFPESEASCPTPNTDF. A helical membrane pass occupies residues 236–256; that stretch reads VAVASCIFLLLSILLLSGFTW. The Cytoplasmic segment spans residues 257-267; sequence QHRWRKSRRTI.

In terms of assembly, non-covalent dimer of an alpha and a beta subunit. IL2R exists in 3 different forms: a high affinity dimer, an intermediate affinity monomer (beta subunit), and a low affinity monomer (alpha subunit). The high and intermediate affinity forms also associate with a gamma subunit.

It is found in the membrane. Receptor for interleukin-2. The receptor is involved in the regulation of immune tolerance by controlling regulatory T cells (TREGs) activity. TREGs suppress the activation and expansion of autoreactive T-cells. This is Interleukin-2 receptor subunit alpha (Il2ra) from Rattus norvegicus (Rat).